A 68-amino-acid chain; its full sequence is Conotoxin Mi11.1 (68 aa).

The first 26 residues, 1–26 (MMLRLTSVSCFLLVIACLNLFQVVLT), serve as a signal peptide directing secretion. 4 cysteine pairs are disulfide-bonded: cysteine 29-cysteine 43, cysteine 36-cysteine 48, cysteine 42-cysteine 52, and cysteine 47-cysteine 56. Tyrosine 60 carries the tyrosine amide modification. A propeptide spanning residues 64-68 (ATFQE) is cleaved from the precursor.

The protein belongs to the conotoxin I2 superfamily. Expressed by the venom duct.

It is found in the secreted. This chain is Conotoxin Mi11.1, found in Conus miles (Soldier cone).